A 249-amino-acid polypeptide reads, in one-letter code: MNQQHLLLDIEGTTCPVRFVSDTLFPFAKKELSRYITQNWDKRPHSKSIRAAWKEWMDDQSAESMIIKQQVTQCEIEEVEGLIQYLKHLISIDRKSTALKDLQGKIWEYGYGNGELKSQLFPETAVCLRQWHEQGLTLSVYSSGSIQAQKLLYRHSLNGNLEDLFSHWFDTHTGPKKSAESYTTIAKQLQSSPNKIWFVSDNGDECNSARLAGMHTLFSLREGNPDRDPRDHKVVHSLREVSALLIAEQ.

It belongs to the HAD-like hydrolase superfamily. MasA/MtnC family. As to quaternary structure, monomer. Requires Mg(2+) as cofactor.

It catalyses the reaction 5-methylsulfanyl-2,3-dioxopentyl phosphate + H2O = 1,2-dihydroxy-5-(methylsulfanyl)pent-1-en-3-one + phosphate. Its pathway is amino-acid biosynthesis; L-methionine biosynthesis via salvage pathway; L-methionine from S-methyl-5-thio-alpha-D-ribose 1-phosphate: step 3/6. It participates in amino-acid biosynthesis; L-methionine biosynthesis via salvage pathway; L-methionine from S-methyl-5-thio-alpha-D-ribose 1-phosphate: step 4/6. In terms of biological role, bifunctional enzyme that catalyzes the enolization of 2,3-diketo-5-methylthiopentyl-1-phosphate (DK-MTP-1-P) into the intermediate 2-hydroxy-3-keto-5-methylthiopentenyl-1-phosphate (HK-MTPenyl-1-P), which is then dephosphorylated to form the acireductone 1,2-dihydroxy-3-keto-5-methylthiopentene (DHK-MTPene). The polypeptide is Enolase-phosphatase E1 (Synechococcus sp. (strain CC9605)).